The following is a 533-amino-acid chain: Probable metalloreductase AIM14 (533 aa).

The next 7 helical transmembrane spans lie at 17–37 (IPYG…LIGA), 61–81 (GGSP…PFVH), 102–122 (VLAT…PGYV), 136–156 (SLCL…ALDS), 168–188 (IPNL…LLSV), 198–218 (SFYL…AYHA), and 220–240 (PGVF…YILS). The 118-residue stretch at 96 to 213 (LGRLSYVLAT…IIGAWVFVFL (118 aa)) folds into the Ferric oxidoreductase domain. Residues 240–366 (SKTVPARGVE…GGSGLSYALP (127 aa)) form the FAD-binding FR-type domain.

The protein belongs to the ferric reductase (FRE) family. AIM14 subfamily.

The protein localises to the membrane. Probable cell surface metalloreductase. May be involved in iron or copper homeostasis. The sequence is that of Probable metalloreductase AIM14 (AIM14) from Lachancea thermotolerans (strain ATCC 56472 / CBS 6340 / NRRL Y-8284) (Yeast).